The following is a 161-amino-acid chain: Alpha-crystallin A chain (161 aa).

The segment at 1-51 (ALGPFYPSRXXXXXXXXXXXXXXXXXXXXXXXXXXXXQSLFRTVLDSGISE) is required for complex formation with BFSP1 and BFSP2. Residue Gln-38 is modified to Deamidated glutamine; partial. Positions 40 to 150 (LFRTVLDSGI…SHSERAIPVS (111 aa)) constitute a sHSP domain. Residue Lys-87 is modified to N6-acetyllysine. His-88 contacts Zn(2+). Deamidated asparagine; partial is present on Asn-89. Zn(2+) is bound by residues Glu-90 and His-95. Ser-110 is subject to Phosphoserine. Deamidated asparagine; partial is present on Asn-111. Residues Cys-119 and Cys-130 are joined by a disulfide bond. The residue at position 135 (Gln-135) is a Deamidated glutamine; partial. Residues 140–161 (ASHSERAIPVSREEKPSSAPSS) are disordered. Residues 141-155 (SHSERAIPVSREEKP) show a composition bias toward basic and acidic residues. Position 142 (His-142) interacts with Zn(2+). O-linked (GlcNAc) serine glycosylation occurs at Ser-150.

This sequence belongs to the small heat shock protein (HSP20) family. As to quaternary structure, heteromer composed of three CRYAA and one CRYAB subunits. Inter-subunit bridging via zinc ions enhances stability, which is crucial as there is no protein turn over in the lens. Can also form homodimers and homotetramers (dimers of dimers) which serve as the building blocks of homooligomers. Within homooligomers, the zinc-binding motif is created from residues of 3 different molecules. His-88 and Glu-90 from one molecule are ligands of the zinc ion, and His-95 and His-142 residues from additional molecules complete the site with tetrahedral coordination geometry. Part of a complex required for lens intermediate filament formation composed of BFSP1, BFSP2 and CRYAA. Post-translationally, undergoes age-dependent proteolytical cleavage at the C-terminus.

It is found in the cytoplasm. Its subcellular location is the nucleus. Contributes to the transparency and refractive index of the lens. In its oxidized form (absence of intramolecular disulfide bond), acts as a chaperone, preventing aggregation of various proteins under a wide range of stress conditions. Required for the correct formation of lens intermediate filaments as part of a complex composed of BFSP1, BFSP2 and CRYAA. The chain is Alpha-crystallin A chain (CRYAA) from Galegeeska rufescens (East African rufous sengi).